A 57-amino-acid polypeptide reads, in one-letter code: LECYDTIFKWHTMTCPEGQNLCFYYFTWRIFLVRGCTATCPVGYSHTHCCDTDKCNN.

Cystine bridges form between C3–C22, C15–C36, C40–C49, and C50–C55.

It belongs to the three-finger toxin family. Short-chain subfamily. As to expression, expressed by the venom gland.

The protein resides in the secreted. In terms of biological role, this toxin shifts the voltage-dependence of Nav1.4/SCN4A activation to more hyperpolarised potentials, inhibits inactivation, and produces large ramp currents, consistent with its profound effects on contractile force in an isolated skeletal muscle preparation. This toxin produces large muscle contractions and fasciculations in the indirectly stimulated chick biventer cervicis nerve-muscle assay, which are significantly inhibited by the addition of the sodium channel antagonist tetrodotoxin. The chain is Delta-elapitoxin-Cb1a from Calliophis bivirgatus (Blue Malaysian coral snake).